The sequence spans 121 residues: Large ribosomal subunit protein uL22 (121 aa).

This sequence belongs to the universal ribosomal protein uL22 family. As to quaternary structure, part of the 50S ribosomal subunit.

Its function is as follows. This protein binds specifically to 23S rRNA; its binding is stimulated by other ribosomal proteins, e.g. L4, L17, and L20. It is important during the early stages of 50S assembly. It makes multiple contacts with different domains of the 23S rRNA in the assembled 50S subunit and ribosome. In terms of biological role, the globular domain of the protein is located near the polypeptide exit tunnel on the outside of the subunit, while an extended beta-hairpin is found that lines the wall of the exit tunnel in the center of the 70S ribosome. The protein is Large ribosomal subunit protein uL22 of Synechococcus sp. (strain WH7803).